Here is a 101-residue protein sequence, read N- to C-terminus: Acylphosphatase-1 (101 aa).

Position 2 is an N-acetylserine (serine 2). At serine 2 the chain carries N-acetylalanine. Residues 11-101 form the Acylphosphatase-like domain; it reads SVDYEIFGKV…LDYTDFQIVK (91 aa). Active-site residues include arginine 26 and asparagine 44.

It belongs to the acylphosphatase family. In terms of tissue distribution, organ-common type isozyme is found in many different tissues.

It carries out the reaction an acyl phosphate + H2O = a carboxylate + phosphate + H(+). The protein is Acylphosphatase-1 (ACYP1) of Bos taurus (Bovine).